Here is a 236-residue protein sequence, read N- to C-terminus: 2-C-methyl-D-erythritol 4-phosphate cytidylyltransferase (236 aa).

The protein belongs to the IspD/TarI cytidylyltransferase family. IspD subfamily. As to quaternary structure, homodimer.

It carries out the reaction 2-C-methyl-D-erythritol 4-phosphate + CTP + H(+) = 4-CDP-2-C-methyl-D-erythritol + diphosphate. The protein operates within isoprenoid biosynthesis; isopentenyl diphosphate biosynthesis via DXP pathway; isopentenyl diphosphate from 1-deoxy-D-xylulose 5-phosphate: step 2/6. In terms of biological role, catalyzes the formation of 4-diphosphocytidyl-2-C-methyl-D-erythritol from CTP and 2-C-methyl-D-erythritol 4-phosphate (MEP). In Salmonella paratyphi C (strain RKS4594), this protein is 2-C-methyl-D-erythritol 4-phosphate cytidylyltransferase.